The sequence spans 301 residues: UDP-N-acetylenolpyruvoylglucosamine reductase (301 aa).

Positions 30-194 (VGGEADYLVF…LSVKFALAPG (165 aa)) constitute an FAD-binding PCMH-type domain. The active site involves R173. S223 acts as the Proton donor in catalysis. E293 is an active-site residue.

The protein belongs to the MurB family. FAD is required as a cofactor.

It is found in the cytoplasm. The catalysed reaction is UDP-N-acetyl-alpha-D-muramate + NADP(+) = UDP-N-acetyl-3-O-(1-carboxyvinyl)-alpha-D-glucosamine + NADPH + H(+). Its pathway is cell wall biogenesis; peptidoglycan biosynthesis. In terms of biological role, cell wall formation. This is UDP-N-acetylenolpyruvoylglucosamine reductase from Streptococcus pneumoniae (strain Hungary19A-6).